Reading from the N-terminus, the 498-residue chain is Glycerol kinase (498 aa).

Thr14 contacts ADP. Positions 14, 15, and 16 each coordinate ATP. Residue Thr14 coordinates sn-glycerol 3-phosphate. Residue Arg18 participates in ADP binding. Residues Arg84, Glu85, Tyr136, and Asp243 each contribute to the sn-glycerol 3-phosphate site. Arg84, Glu85, Tyr136, Asp243, and Gln244 together coordinate glycerol. Positions 265 and 308 each coordinate ADP. ATP-binding residues include Thr265, Gly308, Gln312, and Gly409. Residues Gly409 and Asn413 each coordinate ADP.

Belongs to the FGGY kinase family.

It catalyses the reaction glycerol + ATP = sn-glycerol 3-phosphate + ADP + H(+). It functions in the pathway polyol metabolism; glycerol degradation via glycerol kinase pathway; sn-glycerol 3-phosphate from glycerol: step 1/1. With respect to regulation, inhibited by fructose 1,6-bisphosphate (FBP). In terms of biological role, key enzyme in the regulation of glycerol uptake and metabolism. Catalyzes the phosphorylation of glycerol to yield sn-glycerol 3-phosphate. The sequence is that of Glycerol kinase from Shewanella frigidimarina (strain NCIMB 400).